Here is a 276-residue protein sequence, read N- to C-terminus: Outer plastidial membrane protein porin (276 aa).

It belongs to the eukaryotic mitochondrial porin (TC 1.B.8.1) family.

The protein localises to the plastid outer membrane. Its function is as follows. Forms a channel through the cell membrane that allows diffusion of small hydrophilic molecules. The channel adopts an open conformation at low or zero membrane potential and a closed conformation at potentials above 30-40 mV. The open state has a weak anion selectivity whereas the closed state is cation-selective. The polypeptide is Outer plastidial membrane protein porin (POR1) (Pisum sativum (Garden pea)).